The chain runs to 631 residues: Chaperone protein DnaK (631 aa).

The residue at position 197 (T197) is a Phosphothreonine; by autocatalysis. A disordered region spans residues 600–631 (KKENPQAADAQQGNTANAGKKKDDDVIDAEVE).

The protein belongs to the heat shock protein 70 family.

Its function is as follows. Acts as a chaperone. The chain is Chaperone protein DnaK from Wolinella succinogenes (strain ATCC 29543 / DSM 1740 / CCUG 13145 / JCM 31913 / LMG 7466 / NCTC 11488 / FDC 602W) (Vibrio succinogenes).